The chain runs to 292 residues: Trimeric intracellular cation channel type B (292 aa).

Residues 1-16 (MEYPWDDLTLAFSRTS) lie on the Lumenal side of the membrane. A helical transmembrane segment spans residues 17 to 34 (MFPFFDIAHYLVSVMALK). Over 35-47 (QRPGAVAAAWNNP) the chain is Cytoplasmic. The helical transmembrane segment at 48–69 (LASWLSAMLHCFGGGILSCMLL) threads the bilayer. Topologically, residues 70 to 82 (AESPLKFLTNHTN) are lumenal. Residues 83-100 (ILLASSIWYIVFFCPRDL) form a helical membrane-spanning segment. Over 101 to 103 (VSQ) the chain is Cytoplasmic. Residues 104-122 (GYSYQPIQFLAAGMKEVTR) traverse the membrane as a helical segment. A 1,2-diacyl-sn-glycero-3-phospho-(1D-myo-inositol-4,5-bisphosphate) contacts are provided by K118 and R122. The Lumenal portion of the chain corresponds to 123–140 (TWKIVGGVSDANSYYRNA). Residues 141-158 (WIVMIVVGWARGAGGAVV) traverse the membrane as a helical segment. The Cytoplasmic portion of the chain corresponds to 159 to 178 (TACEQLLKGDWKPEGDEWLK). A helical transmembrane segment spans residues 179-195 (MSFPCKITLLGSIMFTF). The Lumenal segment spans residues 196 to 206 (QHTRHLAISKH). Residues 207–225 (DLMFLYTIFLVTIKVTMMM) traverse the membrane as a helical segment. The Cytoplasmic segment spans residues 226 to 292 (TKDTAVTLTP…GAKRHAKKED (67 aa)). Residues 248-292 (RQQQQFSSSEKKTEVKPSSNGSASSASKRGAEPSGGAKRHAKKED) are disordered. Low complexity predominate over residues 265 to 274 (SSNGSASSAS).

This sequence belongs to the TMEM38 family. Homotrimer; conformation seems to be controled by binding to diacylglycerol (DAG). As to expression, widely expressed.

Its subcellular location is the endoplasmic reticulum membrane. It carries out the reaction K(+)(in) = K(+)(out). Its activity is regulated as follows. Channel activity is activated by increased cytosolic Ca(2+) levels and blocked by luminal high Ca(2+) levels. In terms of biological role, intracellular monovalent cation channel required for maintenance of rapid intracellular calcium release. Acts as a potassium counter-ion channel that functions in synchronization with calcium release from intracellular stores. Activated by increased cytosolic Ca(2+) levels. The protein is Trimeric intracellular cation channel type B (Tmem38b) of Mus musculus (Mouse).